A 181-amino-acid polypeptide reads, in one-letter code: MILVVGLGNIGVEYENTRHNVGFMLIDLLLKESNFTNLTNSKFKGELFKIGSSLLLLKPSTYMNNSGLSVKAVNDFYKCERMIVIHDDIDINLGALRFKKGGSSGGHNGLKSIDTLCGNDYERVRIGVGKGENVISHVLGKFKPEEEITLSKVLEHTKKALLELIENDDLSAISSKYSLKA.

TRNA is bound at residue Tyr-14. The active-site Proton acceptor is His-19. Positions 62, 64, and 108 each coordinate tRNA.

It belongs to the PTH family. Monomer.

It localises to the cytoplasm. The enzyme catalyses an N-acyl-L-alpha-aminoacyl-tRNA + H2O = an N-acyl-L-amino acid + a tRNA + H(+). In terms of biological role, hydrolyzes ribosome-free peptidyl-tRNAs (with 1 or more amino acids incorporated), which drop off the ribosome during protein synthesis, or as a result of ribosome stalling. Its function is as follows. Catalyzes the release of premature peptidyl moieties from peptidyl-tRNA molecules trapped in stalled 50S ribosomal subunits, and thus maintains levels of free tRNAs and 50S ribosomes. The polypeptide is Peptidyl-tRNA hydrolase (Campylobacter jejuni (strain RM1221)).